Consider the following 105-residue polypeptide: MAKWNGQYISPYAEQGKKSEQVKKITVCIPTKVLKILTDERTRRQINNLRHATNSELLCEAFLHAFTGQPLPNDDDLRKERNDEIPQAARILMRDLGINPDTWEY.

This sequence belongs to the MetJ family. Homodimer.

It localises to the cytoplasm. This regulatory protein, when combined with SAM (S-adenosylmethionine) represses the expression of the methionine regulon and of enzymes involved in SAM synthesis. In Hamiltonella defensa subsp. Acyrthosiphon pisum (strain 5AT), this protein is Met repressor.